We begin with the raw amino-acid sequence, 416 residues long: NADH-quinone oxidoreductase subunit D (416 aa).

It belongs to the complex I 49 kDa subunit family. NDH-1 is composed of 14 different subunits. Subunits NuoB, C, D, E, F, and G constitute the peripheral sector of the complex.

The protein resides in the cell inner membrane. It catalyses the reaction a quinone + NADH + 5 H(+)(in) = a quinol + NAD(+) + 4 H(+)(out). Functionally, NDH-1 shuttles electrons from NADH, via FMN and iron-sulfur (Fe-S) centers, to quinones in the respiratory chain. The immediate electron acceptor for the enzyme in this species is believed to be ubiquinone. Couples the redox reaction to proton translocation (for every two electrons transferred, four hydrogen ions are translocated across the cytoplasmic membrane), and thus conserves the redox energy in a proton gradient. This is NADH-quinone oxidoreductase subunit D from Rhodopseudomonas palustris (strain BisB5).